A 273-amino-acid chain; its full sequence is uncharacterized protein (273 aa).

This is an uncharacterized protein from Methanocaldococcus jannaschii (strain ATCC 43067 / DSM 2661 / JAL-1 / JCM 10045 / NBRC 100440) (Methanococcus jannaschii).